Reading from the N-terminus, the 1140-residue chain is GPI inositol-deacylase (1140 aa).

The tract at residues 1–84 is disordered; that stretch reads MHRRSSGSSP…TTWASHDPPR (84 aa). The span at 55-78 shows a compositional bias: polar residues; that stretch reads GKSTPRSRNSSTWRTLSSATTTWA. Residue asparagine 63 is glycosylated (N-linked (GlcNAc...) asparagine). The helical transmembrane segment at 117–137 threads the bilayer; the sequence is SCSILTALTTILACVFLFSIV. The active site involves serine 304. The helical transmembrane segment at 782-802 threads the bilayer; the sequence is LVMRYRTVFAAFPLLVVSLTL. N-linked (GlcNAc...) asparagine glycosylation occurs at asparagine 862. 7 helical membrane passes run 882 to 902, 905 to 925, 952 to 972, 1002 to 1022, 1039 to 1059, 1070 to 1090, and 1094 to 1114; these read AFFW…CVLL, VALI…SKSG, VLLV…VACI, SVFI…LVWA, VLSI…SMIP, SVLL…YAYI, and LVNI…GFSL.

This sequence belongs to the GPI inositol-deacylase family.

Its subcellular location is the endoplasmic reticulum membrane. Functionally, involved in inositol deacylation of GPI-anchored proteins which plays important roles in the quality control and ER-associated degradation of GPI-anchored proteins. The polypeptide is GPI inositol-deacylase (bst1) (Emericella nidulans (strain FGSC A4 / ATCC 38163 / CBS 112.46 / NRRL 194 / M139) (Aspergillus nidulans)).